Here is a 284-residue protein sequence, read N- to C-terminus: 2,3,4,5-tetrahydropyridine-2,6-dicarboxylate N-succinyltransferase (284 aa).

R111 and D148 together coordinate substrate.

Belongs to the transferase hexapeptide repeat family. As to quaternary structure, homotrimer.

It is found in the cytoplasm. The catalysed reaction is (S)-2,3,4,5-tetrahydrodipicolinate + succinyl-CoA + H2O = (S)-2-succinylamino-6-oxoheptanedioate + CoA. It functions in the pathway amino-acid biosynthesis; L-lysine biosynthesis via DAP pathway; LL-2,6-diaminopimelate from (S)-tetrahydrodipicolinate (succinylase route): step 1/3. The protein is 2,3,4,5-tetrahydropyridine-2,6-dicarboxylate N-succinyltransferase of Brucella anthropi (strain ATCC 49188 / DSM 6882 / CCUG 24695 / JCM 21032 / LMG 3331 / NBRC 15819 / NCTC 12168 / Alc 37) (Ochrobactrum anthropi).